Reading from the N-terminus, the 166-residue chain is MSAQIENSIPLDFDLGNMAAFDISPLDETKLSGSEKESFLFSLSRDNVQQLVNKMISLPKERTSDGVLLQLPETVTPLPRAKPLPKPKPETKWQRFARIKGIAPKKREGRLVFDEASGEWVPKWGYKGKNKELETQWLVEEGEKEKKLTSKQVRNTSKKIKRSRRH.

Serine 34 and serine 64 each carry phosphoserine. Residues 144–166 (KEKKLTSKQVRNTSKKIKRSRRH) form a disordered region. Basic residues predominate over residues 156-166 (TSKKIKRSRRH).

The protein belongs to the RRS1 family. In terms of assembly, component of a hexameric 5S RNP precursor complex, composed of 5S RNA, rrs1, rpf2, rpl5a/rpl5b, rpl11a/rpl11b and syo1; this complex acts as a precursor for ribosome assembly. Interacts with sad1.

The protein resides in the nucleus. Its subcellular location is the nucleolus. Its function is as follows. Involved in ribosomal large subunit assembly. The polypeptide is Ribosome biogenesis regulatory protein homolog (Schizosaccharomyces pombe (strain 972 / ATCC 24843) (Fission yeast)).